The chain runs to 42 residues: Cytochrome b559 subunit beta (42 aa).

Residues 17 to 33 (WLAIHAIGIPAVFFIGS) form a helical membrane-spanning segment. Heme is bound at residue His-21.

This sequence belongs to the PsbE/PsbF family. In terms of assembly, heterodimer of an alpha subunit and a beta subunit. PSII is composed of 1 copy each of membrane proteins PsbA, PsbB, PsbC, PsbD, PsbE, PsbF, PsbH, PsbI, PsbJ, PsbK, PsbL, PsbM, PsbT, PsbX, PsbY, PsbZ, Psb30/Ycf12, at least 3 peripheral proteins of the oxygen-evolving complex and a large number of cofactors. It forms dimeric complexes. Heme b serves as cofactor.

It is found in the plastid. The protein resides in the cyanelle thylakoid membrane. In terms of biological role, this b-type cytochrome is tightly associated with the reaction center of photosystem II (PSII). PSII is a light-driven water:plastoquinone oxidoreductase that uses light energy to abstract electrons from H(2)O, generating O(2) and a proton gradient subsequently used for ATP formation. It consists of a core antenna complex that captures photons, and an electron transfer chain that converts photonic excitation into a charge separation. The sequence is that of Cytochrome b559 subunit beta from Cyanophora paradoxa.